The chain runs to 535 residues: T-complex protein 1 subunit zeta (535 aa).

This sequence belongs to the TCP-1 chaperonin family. Heterooligomeric complex of about 850 to 900 kDa that forms two stacked rings, 12 to 16 nm in diameter.

Its subcellular location is the cytoplasm. Its function is as follows. Molecular chaperone; assists the folding of proteins upon ATP hydrolysis. Known to play a role, in vitro, in the folding of actin and tubulin. This Schizosaccharomyces pombe (strain 972 / ATCC 24843) (Fission yeast) protein is T-complex protein 1 subunit zeta (cct6).